Consider the following 158-residue polypeptide: NAD(P)H-quinone oxidoreductase subunit J, chloroplastic (158 aa).

It belongs to the complex I 30 kDa subunit family. NDH is composed of at least 16 different subunits, 5 of which are encoded in the nucleus.

Its subcellular location is the plastid. It localises to the chloroplast thylakoid membrane. It catalyses the reaction a plastoquinone + NADH + (n+1) H(+)(in) = a plastoquinol + NAD(+) + n H(+)(out). The catalysed reaction is a plastoquinone + NADPH + (n+1) H(+)(in) = a plastoquinol + NADP(+) + n H(+)(out). Functionally, NDH shuttles electrons from NAD(P)H:plastoquinone, via FMN and iron-sulfur (Fe-S) centers, to quinones in the photosynthetic chain and possibly in a chloroplast respiratory chain. The immediate electron acceptor for the enzyme in this species is believed to be plastoquinone. Couples the redox reaction to proton translocation, and thus conserves the redox energy in a proton gradient. The protein is NAD(P)H-quinone oxidoreductase subunit J, chloroplastic of Helianthus annuus (Common sunflower).